Reading from the N-terminus, the 1071-residue chain is Exportin-1 (1071 aa).

The tract at residues 1–679 (MPAIMTMLAD…QQATKNVDIL (679 aa)) is necessary for HTLV-1 Rex-mediated mRNA export. In terms of domain architecture, Importin N-terminal spans 46–112 (AQEVLTHLKE…KKYVVGLIIK (67 aa)). 6 HEAT repeats span residues 217–240 (QNAPLVHATLETLLRFLNWIPLGY), 241–277 (IFETKLISTLIYKFLNVPMFRNVSLKCLTEIAGVSVS), 354–472 (MLLV…YVDT), 515–553 (RFLVTVIKDLLGLCEQKRGKDNKAIIASNIMYIVGQYPR), 560–597 (KFLKTVVNKLFEFMHETHDGVQDMACDTFIKIAQKCRR), and 602–639 (VQVGEVMPFIDEILNNINTIICDLQPQQVHTFYEAVGY). The interaction with Ran and nuclear export complex formation stretch occupies residues 327–450 (CTFLKEHDQL…VREFMKDTDS (124 aa)). A Phosphoserine modification is found at Ser391. The tract at residues 411–414 (PMLF) is necessary for HTLV-1 Rex multimerization. The interval 411–481 (PMLFKVRLLM…TERIMTEKLH (71 aa)) is interaction with RANBP3. N6-acetyllysine is present on Lys446. Position 448 is a phosphothreonine (Thr448). Ser450 carries the post-translational modification Phosphoserine. A Phosphotyrosine modification is found at Tyr454. Lys693 carries the N6-acetyllysine modification. HEAT repeat units follow at residues 775-813 (NFVPPLLDAVLIDYQRNVPAAREPEVLSTMAIIVNKLGG), 885-916 (TMRNVADTGLQILFTLLQNVAQEEAAAQSFYQ), 917-954 (TYFCDILQHIFSVVTDTSHTAGLTMHASILAYMFNLVE), and 1002-1039 (FSLNQDIPAFKEHLRDFLVQIKEFAGEDTSDLFLEERE). Residues 800-820 (VLSTMAIIVNKLGGHITAEIP) form an interaction with HIV-1 Rev region. Ser1031 carries the post-translational modification Phosphoserine.

It belongs to the exportin family. In terms of assembly, found in a U snRNA export complex with PHAX/RNUXA, NCBP1/CBP80, NCBP2/CBP20, RAN, XPO1 and m7G-capped RNA. Component of a nuclear export receptor complex composed of KPNB1, RAN, SNUPN and XPO1. Found in a trimeric export complex with SNUPN, RAN and XPO1. Found in a nuclear export complex with RANBP3 and RAN. Found in a 60S ribosomal subunit export complex with NMD3, RAN, XPO1. Interacts with DDX3X, NMD3, NUP42, NUP88, NUP214, RANBP3 and TERT. Interacts with NEMF (via its N-terminus). Interacts with the monomeric form of BIRC5/survivin deacetylated at 'Lys-129'. Interacts with DTNBP1 and SERTAD2; the interactions translocate DTNBP1 and SERTAD2 out of the nucleus. Interacts with ATF2. Interacts with SLC35G1 and STIM1. Interacts with DCAF8. Interacts with CPEB3. Interacts with HAX1. Interacts with BOK; translocates to the cytoplasm. Interacts with HSP90AB1. Interacts with LRPPRC; interacts with LRPPRC alone and also when LRPPRC is in complex with EIF4E and with EIF4E sensitivity element (4ESE)-containing mRNAs to form an EIF4E-dependent mRNA export complex. (Microbial infection) Interacts with HIV-1 Rev. As to quaternary structure, (Microbial infection) Interacts with HTLV-1 Rex. In terms of assembly, (Microbial infection) Interacts with influenza A nucleoprotein. (Microbial infection) Interacts with Epstein-Barr virus protein BMLF1. As to quaternary structure, (Microbial infection) Part of a tetrameric complex composed of CRM1, importin alpha/beta dimer and the Venezuelan equine encephalitis virus (VEEV) capsid; this complex blocks the receptor-mediated transport through the nuclear pore. In terms of assembly, (Microbial infection) Interacts with SARS-CoV virus protein ORF9b; this interaction mediates protein ORF9b export out of the nucleus. In terms of tissue distribution, expressed in heart, brain, placenta, lung, liver, skeletal muscle, pancreas, spleen, thymus, prostate, testis, ovary, small intestine, colon and peripheral blood leukocytes. Not expressed in the kidney.

The protein localises to the cytoplasm. The protein resides in the nucleus. It localises to the nucleoplasm. Its subcellular location is the cajal body. It is found in the nucleolus. In terms of biological role, mediates the nuclear export of cellular proteins (cargos) bearing a leucine-rich nuclear export signal (NES) and of RNAs. In the nucleus, in association with RANBP3, binds cooperatively to the NES on its target protein and to the GTPase RAN in its active GTP-bound form (Ran-GTP). Docking of this complex to the nuclear pore complex (NPC) is mediated through binding to nucleoporins. Upon transit of a nuclear export complex into the cytoplasm, disassembling of the complex and hydrolysis of Ran-GTP to Ran-GDP (induced by RANBP1 and RANGAP1, respectively) cause release of the cargo from the export receptor. The directionality of nuclear export is thought to be conferred by an asymmetric distribution of the GTP- and GDP-bound forms of Ran between the cytoplasm and nucleus. Involved in U3 snoRNA transport from Cajal bodies to nucleoli. Binds to late precursor U3 snoRNA bearing a TMG cap. Its function is as follows. (Microbial infection) Mediates the export of unspliced or incompletely spliced RNAs out of the nucleus from different viruses including HIV-1, HTLV-1 and influenza A. Interacts with, and mediates the nuclear export of HIV-1 Rev and HTLV-1 Rex proteins. Involved in HTLV-1 Rex multimerization. The polypeptide is Exportin-1 (XPO1) (Homo sapiens (Human)).